Consider the following 1438-residue polypeptide: Pyochelin synthetase PchE (1438 aa).

A Carrier 1 domain is found at 6–85 (DSRTALRDWL…AWLDLLACAD (80 aa)). Serine 46 carries the post-translational modification O-(pantetheine 4'-phosphoryl)serine. The condensation/cyclization stretch occupies residues 136 to 442 (RTRDVDPQRL…ARRQGQPRSA (307 aa)). Residues 563–950 (RAAEAPDADA…GRVDQQVKVR (388 aa)) are adenylation. Residues 1350–1425 (EPLEAHEQAL…GLARHLQAQT (76 aa)) form the Carrier 2 domain. Serine 1385 is modified (O-(pantetheine 4'-phosphoryl)serine).

This sequence belongs to the NRP synthetase family. Requires pantetheine 4'-phosphate as cofactor.

It catalyses the reaction holo-[peptidyl-carrier protein] + L-cysteine + ATP = L-cysteinyl-[peptidyl-carrier protein] + AMP + diphosphate. It functions in the pathway siderophore biosynthesis. It participates in antifungal biosynthesis. Involved in the biosynthesis of the siderophore pyochelin. Accepts salicylate activated by PchD at the first peptidyl carrier domain (ArCP), and activates and fixes one molecule of cysteine at the second peptidyl carrier domain (PCP1) via a thioester linkage to the phosphopanthetheine moiety. Then catalyzes the condensation reaction between the salicylate bound to the first site and the cysteine bound to the second site, and the cyclization of the cysteine to form the salicyl-thiazolinyl-S-PCP1 intermediate at the second site. When this intermediate is released by the action of a thioesterase, it produces the antifungal antibiotic dihydroaeruginoic acid (Dha or hydroxyphenyl-thiazolinyl-carboxylate). In Pseudomonas aeruginosa (strain UCBPP-PA14), this protein is Pyochelin synthetase PchE.